Consider the following 1785-residue polypeptide: 1,3-beta-glucan synthase component FKS3 (1785 aa).

The next 8 membrane-spanning stretches (helical) occupy residues 337 to 357 (FWIIHFAPFWFFTTFNSPTLY), 375 to 395 (LSVIAFGGTIACLVQILATVF), 415 to 435 (IGLLFCLAINLGPSVYVLGFF), 444 to 464 (AYIVSIVQLIIAFLTTFFFAV), 508 to 528 (LWVFVYLAKYIESYFFLTLSL), 547 to 567 (YLLGPILCKWQAKITLVLMLL), 572 to 592 (LFFLDTYLWYIICNCIFSIVL), and 712 to 732 (LATPISEPVPVDCMPTFTVLV). 2 stretches are compositionally biased toward basic and acidic residues: residues 791–801 (ESSHDEDRLEI) and 815–824 (DHTESRKLPT). Residues 791–824 (ESSHDEDRLEIPDALYDPRSSPLSDHTESRKLPT) are disordered. N-linked (GlcNAc...) asparagine glycosylation is found at asparagine 844, asparagine 874, asparagine 955, asparagine 1002, and asparagine 1170. Helical transmembrane passes span 1215–1235 (LFISFSVQLFFVLLLNLGALN), 1268–1288 (VSIFVLSIFIVFFIAFAPLLI), and 1303–1323 (FLHHLLSMAPLFEVFVCQVYS). N-linked (GlcNAc...) asparagine glycosylation is present at asparagine 1360. The next 5 helical transmembrane spans lie at 1370–1390 (FFMLLFAIISMWQPALLWFWI), 1394–1414 (SMCFAPFIFNPHQFAFMDFFI), 1475–1495 (FAELFLPFCVFLFNFTAFSFI), 1514–1534 (LLVTFLPIFLNSIVLFLLFWV), and 1549–1569 (AGAVIAFIAHTFSVLVYLLDF). Asparagine 1579 carries an N-linked (GlcNAc...) asparagine glycan. Transmembrane regions (helical) follow at residues 1585 to 1605 (ILLITCINMHLILFKVFTTIF), 1655 to 1675 (FFLGHFLLFIQTPIILLPFID), and 1713 to 1733 (FSLYFVMLGVLLFMLIAPFFA). Residue asparagine 1761 is glycosylated (N-linked (GlcNAc...) asparagine).

It belongs to the glycosyltransferase 48 family. N-glycosylated.

Its subcellular location is the mitochondrion. The protein resides in the membrane. It carries out the reaction [(1-&gt;3)-beta-D-glucosyl](n) + UDP-alpha-D-glucose = [(1-&gt;3)-beta-D-glucosyl](n+1) + UDP + H(+). Its function is as follows. Required for spore wall assembly. The chain is 1,3-beta-glucan synthase component FKS3 (FKS3) from Saccharomyces cerevisiae (strain ATCC 204508 / S288c) (Baker's yeast).